Consider the following 585-residue polypeptide: A-type ATP synthase subunit A (585 aa).

235–242 (GPFGSGKT) contributes to the ATP binding site.

Belongs to the ATPase alpha/beta chains family. In terms of assembly, has multiple subunits with at least A(3), B(3), C, D, E, F, H, I and proteolipid K(x).

The protein resides in the cell membrane. It carries out the reaction ATP + H2O + 4 H(+)(in) = ADP + phosphate + 5 H(+)(out). Its function is as follows. Component of the A-type ATP synthase that produces ATP from ADP in the presence of a proton gradient across the membrane. The A chain is the catalytic subunit. This is A-type ATP synthase subunit A from Halobacterium salinarum (strain ATCC 29341 / DSM 671 / R1).